We begin with the raw amino-acid sequence, 188 residues long: Ribosome-recycling factor (188 aa).

It belongs to the RRF family.

Its subcellular location is the cytoplasm. Responsible for the release of ribosomes from messenger RNA at the termination of protein biosynthesis. May increase the efficiency of translation by recycling ribosomes from one round of translation to another. This Granulibacter bethesdensis (strain ATCC BAA-1260 / CGDNIH1) protein is Ribosome-recycling factor.